Consider the following 180-residue polypeptide: DNA replication regulator protein HobA (180 aa).

The Ca(2+) site is built by Glu17, Glu27, Glu140, Glu143, and Asn176.

In terms of assembly, forms dimers and homotetramers. Interacts with domains I and II (residues 1-112) of DnaA. In a crystal with domains I and II of DnaA HobA forms tetramers with DnaA fragments bound at the dimer interface of the tetramer. The cofactor is Ca(2+).

Its function is as follows. Required for DNA replication initiation. Increases binding of DnaA to oriC region. The protein is DNA replication regulator protein HobA of Helicobacter pylori (strain ATCC 700392 / 26695) (Campylobacter pylori).